Reading from the N-terminus, the 254-residue chain is Triosephosphate isomerase 2 (254 aa).

Position 9-11 (9-11 (NMK)) interacts with substrate. His-96 serves as the catalytic Electrophile. Residue Glu-168 is the Proton acceptor of the active site. 2 residues coordinate substrate: Gly-174 and Ser-212.

This sequence belongs to the triosephosphate isomerase family. In terms of assembly, homodimer.

The protein localises to the cytoplasm. It carries out the reaction D-glyceraldehyde 3-phosphate = dihydroxyacetone phosphate. It participates in polyol metabolism; glycerol degradation. Functionally, involved in the glycerol metabolism. Catalyzes stereospecifically the conversion of dihydroxyacetone phosphate (DHAP) to D-glyceraldehyde-3-phosphate (G3P). The sequence is that of Triosephosphate isomerase 2 from Listeria innocua serovar 6a (strain ATCC BAA-680 / CLIP 11262).